Reading from the N-terminus, the 498-residue chain is Glycerol kinase (498 aa).

Residue T12 coordinates ADP. ATP contacts are provided by T12, T13, and S14. Residue T12 coordinates sn-glycerol 3-phosphate. ADP is bound at residue R16. Positions 82, 83, 134, and 243 each coordinate sn-glycerol 3-phosphate. Glycerol-binding residues include R82, E83, Y134, D243, and Q244. The ADP site is built by T265 and G308. 4 residues coordinate ATP: T265, G308, Q312, and G409. G409 and N413 together coordinate ADP.

This sequence belongs to the FGGY kinase family. Homotetramer and homodimer (in equilibrium).

The enzyme catalyses glycerol + ATP = sn-glycerol 3-phosphate + ADP + H(+). Its pathway is polyol metabolism; glycerol degradation via glycerol kinase pathway; sn-glycerol 3-phosphate from glycerol: step 1/1. Activated by phosphorylation and inhibited by fructose 1,6-bisphosphate (FBP). In terms of biological role, key enzyme in the regulation of glycerol uptake and metabolism. Catalyzes the phosphorylation of glycerol to yield sn-glycerol 3-phosphate. The sequence is that of Glycerol kinase from Clostridium botulinum (strain Langeland / NCTC 10281 / Type F).